The following is a 495-amino-acid chain: Cytochrome P450 monooxygenase cnsC (495 aa).

A heme-binding site is contributed by cysteine 434.

Belongs to the cytochrome P450 family. Requires heme as cofactor.

Its pathway is alkaloid biosynthesis. Its function is as follows. Cytochrome P450 monooxygenase; part of the gene cluster that mediates the biosynthesis of communesins, a prominent class of indole alkaloids with great potential as pharmaceuticals. Communesins are biosynthesized by the coupling of tryptamine and aurantioclavine, two building blocks derived from L-tryptophan. The L-tryptophan decarboxylase cnsB converts L-tryptophan to tryptamine, whereas the tryptophan dimethylallyltransferase cnsF converts L-tryptophan to 4-dimethylallyl tryptophan which is further transformed to aurantioclavine by the aurantioclavine synthase cnsA, probably aided by the catalase cnsD. The cytochrome P450 monooxygenase cnsC catalyzes the heterodimeric coupling between the two different indole moieties, tryptamine and aurantioclavine, to construct vicinal quaternary stereocenters and yield the heptacyclic communesin scaffold. The O-methyltransferase cnsE then methylates the communesin scaffold to produce communesin K, the simplest characterized communesin that contains the heptacyclic core. The dioxygenase cnsJ converts communesin K into communesin I. Acylation to introduce the hexadienyl group at position N16 of communesin I by the acyltransferase cnsK leads to the production of communesin B. The hexadienyl group is produced by the highly reducing polyketide synthase cnsI, before being hydrolytically removed from cnsI by the serine hydrolase cnsH, converted into hexadienyl-CoA by the CoA ligase cnsG, and then transferred to communesin I by cnsK. Surprisingly, cnsK may also be a promiscuous acyltransferase that can tolerate a range of acyl groups, including acetyl-, propionyl-, and butyryl-CoA, which lead to communesins A, G and H respectively. The roles of the alpha-ketoglutarate-dependent dioxygenases cnsM and cnsP have still to be determined. The sequence is that of Cytochrome P450 monooxygenase cnsC from Penicillium expansum (Blue mold rot fungus).